The sequence spans 160 residues: Cyclic pyranopterin monophosphate synthase (160 aa).

Substrate-binding positions include 77-79 (LCH) and 115-116 (ME). Residue aspartate 130 is part of the active site.

It belongs to the MoaC family. Homohexamer; trimer of dimers.

It catalyses the reaction (8S)-3',8-cyclo-7,8-dihydroguanosine 5'-triphosphate = cyclic pyranopterin phosphate + diphosphate. It participates in cofactor biosynthesis; molybdopterin biosynthesis. Catalyzes the conversion of (8S)-3',8-cyclo-7,8-dihydroguanosine 5'-triphosphate to cyclic pyranopterin monophosphate (cPMP). This chain is Cyclic pyranopterin monophosphate synthase, found in Parvibaculum lavamentivorans (strain DS-1 / DSM 13023 / NCIMB 13966).